A 180-amino-acid polypeptide reads, in one-letter code: Ribosome maturation factor RimM (180 aa).

Positions 99 to 172 (EDEFYQVDLI…FLVVDPVAAG (74 aa)) constitute a PRC barrel domain.

This sequence belongs to the RimM family. In terms of assembly, binds ribosomal protein uS19.

It localises to the cytoplasm. Its function is as follows. An accessory protein needed during the final step in the assembly of 30S ribosomal subunit, possibly for assembly of the head region. Essential for efficient processing of 16S rRNA. May be needed both before and after RbfA during the maturation of 16S rRNA. It has affinity for free ribosomal 30S subunits but not for 70S ribosomes. The protein is Ribosome maturation factor RimM of Bartonella henselae (strain ATCC 49882 / DSM 28221 / CCUG 30454 / Houston 1) (Rochalimaea henselae).